The chain runs to 445 residues: E3 ubiquitin-protein ligase MYLIP (445 aa).

Positions 1 to 279 (MLCYVTRPDA…ETHAFYRCDT (279 aa)) constitute an FERM domain. The Fe cation site is built by C360, C363, and C368. The segment at 387–422 (CMVCCEEEINSTFCPCGHTVCCESCAAQLQSCPVCR) adopts an RING-type zinc-finger fold. The tract at residues 431-433 (VYL) is critical for homodimerization.

As to quaternary structure, homodimer. Interacts with the E2 ubiquitin-conjugating enzyme, UBE2D1 (via RING-type zinc finger). Interacts with myosin regulatory light chain (MRLC) and TMEM4. Post-translationally, autoubiquitinated. Ubiquitously expressed.

It localises to the cytoplasm. It is found in the cell membrane. It carries out the reaction S-ubiquitinyl-[E2 ubiquitin-conjugating enzyme]-L-cysteine + [acceptor protein]-L-lysine = [E2 ubiquitin-conjugating enzyme]-L-cysteine + N(6)-ubiquitinyl-[acceptor protein]-L-lysine.. It participates in protein modification; protein ubiquitination. With respect to regulation, can bind 1 iron ion per dimer. Iron binding seems to decrease LDLR degradation activity. In terms of biological role, E3 ubiquitin-protein ligase that mediates ubiquitination and subsequent proteasomal degradation of myosin regulatory light chain (MRLC), LDLR, VLDLR and LRP8. Activity depends on E2 enzymes of the UBE2D family. Proteasomal degradation of MRLC leads to inhibit neurite outgrowth in presence of NGF by counteracting the stabilization of MRLC by saposin-like protein (CNPY2/MSAP) and reducing CNPY2-stimulated neurite outgrowth. Acts as a sterol-dependent inhibitor of cellular cholesterol uptake by mediating ubiquitination and subsequent degradation of LDLR. In Homo sapiens (Human), this protein is E3 ubiquitin-protein ligase MYLIP (MYLIP).